The sequence spans 390 residues: MKLDHWQKTLDHLRDEEMLRGLKTVSGAQRDHVLLDGKDVLLLCSNNYLGLADHPALIEATCRATRDCGTGTGASRLVSGSMALHEELESKLAQFKGTQRALLFNAGYAANTGILQGLMGADDVIFSDSLNHASIIDGCRLSRAKTVVYPHRDTHALERLMAKEAPLRKGQWLIVTDGVFSMDGDLAPLPELVALKKRYDCLLMVDDAHGTGVLGDSGKGTGEYLGCLTDIDLHMGTLGKALGGFGAFVAGPDVVVQFLINRARSFIFSTSLPPGVVAAGIAALDIVNGSEGRQRRMNLQKLCTLFTGQLTESLPPEVRGETPIVPILTGDPEPTMRASAWLEAQGIFVQGIRPPTVPQGRCRLRATLMATHQVEDLLRAADLIRKVLSA.

Substrate is bound at residue Arg20. 107–108 (GY) contributes to the pyridoxal 5'-phosphate binding site. His132 provides a ligand contact to substrate. Pyridoxal 5'-phosphate contacts are provided by residues Ser181, 206-209 (DDAH), and 237-240 (TLGK). Lys240 bears the N6-(pyridoxal phosphate)lysine mark. Thr356 contributes to the substrate binding site.

It belongs to the class-II pyridoxal-phosphate-dependent aminotransferase family. BioF subfamily. In terms of assembly, homodimer. It depends on pyridoxal 5'-phosphate as a cofactor.

The enzyme catalyses 6-carboxyhexanoyl-[ACP] + L-alanine + H(+) = (8S)-8-amino-7-oxononanoate + holo-[ACP] + CO2. Its pathway is cofactor biosynthesis; biotin biosynthesis. Functionally, catalyzes the decarboxylative condensation of pimeloyl-[acyl-carrier protein] and L-alanine to produce 8-amino-7-oxononanoate (AON), [acyl-carrier protein], and carbon dioxide. This Syntrophotalea carbinolica (strain DSM 2380 / NBRC 103641 / GraBd1) (Pelobacter carbinolicus) protein is Putative 8-amino-7-oxononanoate synthase (bioF).